Consider the following 209-residue polypeptide: MKKSTKKESTHSKEESQTQAGNSEARKSGPSTKKAGEKTAEPEKATAGSGTEKSPEAACREENELLKDQLFRLAADFDNFKKRTARQMEENRKAVLEQVLLDFVEVTDNFERALKSAQTAEDMGSIVSGIEQLSKQFFSILQKYGLERIKCEKAGEFDPHRHEAVQHIETSEVPDNTIVDVYKPGYSLNEKVIRPALVSVARNPDETEK.

2 stretches are compositionally biased toward basic and acidic residues: residues 1–16 and 34–44; these read MKKSTKKESTHSKEES and KAGEKTAEPEK. A disordered region spans residues 1–61; that stretch reads MKKSTKKEST…EKSPEAACRE (61 aa).

This sequence belongs to the GrpE family. In terms of assembly, homodimer.

It is found in the cytoplasm. Functionally, participates actively in the response to hyperosmotic and heat shock by preventing the aggregation of stress-denatured proteins, in association with DnaK and GrpE. It is the nucleotide exchange factor for DnaK and may function as a thermosensor. Unfolded proteins bind initially to DnaJ; upon interaction with the DnaJ-bound protein, DnaK hydrolyzes its bound ATP, resulting in the formation of a stable complex. GrpE releases ADP from DnaK; ATP binding to DnaK triggers the release of the substrate protein, thus completing the reaction cycle. Several rounds of ATP-dependent interactions between DnaJ, DnaK and GrpE are required for fully efficient folding. The polypeptide is Protein GrpE (Methanosarcina acetivorans (strain ATCC 35395 / DSM 2834 / JCM 12185 / C2A)).